A 48-amino-acid polypeptide reads, in one-letter code: Light-harvesting polypeptide B-885 beta-1 chain (48 aa).

Residues 1–20 (AEDRKSLSGLTEQEAQEFGT) lie on the Cytoplasmic side of the membrane. Residues 21–43 (LYTQGVAFVAVIAVVAHALVWAW) traverse the membrane as a helical segment. His37 is an a bacteriochlorophyll binding site. At 44 to 48 (RPWLQ) the chain is on the periplasmic side.

Belongs to the antenna complex beta subunit family. As to quaternary structure, the core complex is formed by different alpha and beta chains, binding bacteriochlorophyll molecules, and arranged most probably in tetrameric structures disposed around the reaction center. The non-pigmented gamma chains may constitute additional components.

It is found in the cell inner membrane. Functionally, antenna complexes are light-harvesting systems, which transfer the excitation energy to the reaction centers. The polypeptide is Light-harvesting polypeptide B-885 beta-1 chain (Rhodocyclus tenuis (Rhodospirillum tenue)).